The primary structure comprises 331 residues: Fructose-1,6-bisphosphatase class 1 (331 aa).

Mg(2+) contacts are provided by Glu-100, Asp-120, Leu-122, and Asp-123. Substrate is bound by residues Asp-123–Ser-126, Asn-216, Tyr-243, Tyr-261–Tyr-263, and Lys-273. Glu-279 contributes to the Mg(2+) binding site.

It belongs to the FBPase class 1 family. As to quaternary structure, homotetramer. It depends on Mg(2+) as a cofactor.

The protein resides in the cytoplasm. It catalyses the reaction beta-D-fructose 1,6-bisphosphate + H2O = beta-D-fructose 6-phosphate + phosphate. It participates in carbohydrate biosynthesis; gluconeogenesis. The sequence is that of Fructose-1,6-bisphosphatase class 1 from Amoebophilus asiaticus (strain 5a2).